Consider the following 243-residue polypeptide: Uridylate kinase (243 aa).

Position 15–18 (15–18 (KLSG)) interacts with ATP. The segment at 23 to 28 (GSEGFG) is involved in allosteric activation by GTP. A UMP-binding site is contributed by Gly-57. ATP is bound by residues Gly-58 and Arg-62. UMP is bound by residues Asp-77 and 138–145 (TGNPFFTT). Residues Thr-165, Tyr-171, and Asp-174 each coordinate ATP.

This sequence belongs to the UMP kinase family. As to quaternary structure, homohexamer.

Its subcellular location is the cytoplasm. It carries out the reaction UMP + ATP = UDP + ADP. It functions in the pathway pyrimidine metabolism; CTP biosynthesis via de novo pathway; UDP from UMP (UMPK route): step 1/1. With respect to regulation, allosterically activated by GTP. Inhibited by UTP. Catalyzes the reversible phosphorylation of UMP to UDP. This Vibrio cholerae serotype O1 (strain ATCC 39541 / Classical Ogawa 395 / O395) protein is Uridylate kinase.